The following is a 477-amino-acid chain: Chromosomal replication initiator protein DnaA (477 aa).

Residues Met1–Val87 are domain I, interacts with DnaA modulators. Residues Val87–Ser132 form a domain II region. The segment at Pro112–Asp131 is disordered. The domain III, AAA+ region stretch occupies residues Arg133 to Ala349. ATP is bound by residues Gly177, Gly179, Lys180, and Thr181. The interval Ser350 to Met477 is domain IV, binds dsDNA.

This sequence belongs to the DnaA family. As to quaternary structure, oligomerizes as a right-handed, spiral filament on DNA at oriC.

The protein resides in the cytoplasm. In terms of biological role, plays an essential role in the initiation and regulation of chromosomal replication. ATP-DnaA binds to the origin of replication (oriC) to initiate formation of the DNA replication initiation complex once per cell cycle. Binds the DnaA box (a 9 base pair repeat at the origin) and separates the double-stranded (ds)DNA. Forms a right-handed helical filament on oriC DNA; dsDNA binds to the exterior of the filament while single-stranded (ss)DNA is stabiized in the filament's interior. The ATP-DnaA-oriC complex binds and stabilizes one strand of the AT-rich DNA unwinding element (DUE), permitting loading of DNA polymerase. After initiation quickly degrades to an ADP-DnaA complex that is not apt for DNA replication. Binds acidic phospholipids. This chain is Chromosomal replication initiator protein DnaA, found in Clavibacter michiganensis subsp. michiganensis (strain NCPPB 382).